A 59-amino-acid chain; its full sequence is Cecropin-C type 1 (59 aa).

A signal peptide spans 1–23 (MNFTKIFVLIAMAALLLVGQSEA).

It localises to the secreted. In terms of biological role, cecropins have lytic and antibacterial activity against several Gram-positive and Gram-negative bacteria. In Aedes albopictus (Asian tiger mosquito), this protein is Cecropin-C type 1 (CECC1).